A 290-amino-acid chain; its full sequence is 33 kDa chaperonin (290 aa).

Disulfide bonds link Cys-235–Cys-237 and Cys-268–Cys-271.

Belongs to the HSP33 family. Post-translationally, under oxidizing conditions two disulfide bonds are formed involving the reactive cysteines. Under reducing conditions zinc is bound to the reactive cysteines and the protein is inactive.

The protein resides in the cytoplasm. Its function is as follows. Redox regulated molecular chaperone. Protects both thermally unfolding and oxidatively damaged proteins from irreversible aggregation. Plays an important role in the bacterial defense system toward oxidative stress. The protein is 33 kDa chaperonin of Streptococcus pyogenes serotype M1.